A 189-amino-acid polypeptide reads, in one-letter code: DAN domain family member 5 (189 aa).

Residues 1-22 form the signal peptide; that stretch reads MLLGQLSTLLCLLSGALPTGSG. An N-linked (GlcNAc...) asparagine glycan is attached at Asn38. 4 disulfide bridges follow: Cys101/Cys148, Cys115/Cys162, Cys125/Cys183, and Cys129/Cys185. A CTCK domain is found at 101–186; that stretch reads CKAVPFVQVF…TMLIEGCHCS (86 aa).

This sequence belongs to the DAN family. As to expression, expressed in the retina, in inner segments of photoreceptors, at or close to the outer plexiform layer and in the ganglion cell layer (at protein level).

It is found in the secreted. In terms of biological role, antagonist of the extracellular signaling protein NODAL, which is required for correct left-right patterning during embryonic development. Antagonist of BMP and TGF-beta signaling. Independently of its role in left-right axis establishment, plays a role during heart development, possibly through the regulation of TGF-beta/Nodal signaling pathway. Displays anti-angiogenic activity by inhibiting endothelial sprouting, migration, and proliferation. Once internalized by endothelial cells, may alter their redox and glycolytic balance. The polypeptide is DAN domain family member 5 (DAND5) (Homo sapiens (Human)).